A 91-amino-acid chain; its full sequence is uncharacterized protein (91 aa).

2 consecutive transmembrane segments (helical) span residues 10–30 (VLFT…AGGI) and 46–66 (LLVA…QALS). Residues 68–91 (MRRQDGARGTARAGRNSARRRMPS) form a disordered region.

The protein localises to the cell membrane. This is an uncharacterized protein from Sinorhizobium fredii (strain NBRC 101917 / NGR234).